We begin with the raw amino-acid sequence, 568 residues long: Periplasmic trehalase (568 aa).

The N-terminal stretch at 1 to 39 (MPHVVARSGDVMSSAAPPSCTSLLGLSLSMFVAPCTLTA) is a signal peptide. Substrate is bound by residues arginine 169, 176 to 177 (WD), asparagine 213, 222 to 224 (RSQ), 294 to 296 (RPE), and glycine 327. Active-site proton donor/acceptor residues include aspartate 329 and glutamate 511. A substrate-binding site is contributed by glutamate 526.

It belongs to the glycosyl hydrolase 37 family.

It is found in the periplasm. The enzyme catalyses alpha,alpha-trehalose + H2O = alpha-D-glucose + beta-D-glucose. Its function is as follows. Provides the cells with the ability to utilize trehalose at high osmolarity by splitting it into glucose molecules that can subsequently be taken up by the phosphotransferase-mediated uptake system. The protein is Periplasmic trehalase of Xanthomonas oryzae pv. oryzae (strain MAFF 311018).